Reading from the N-terminus, the 293-residue chain is Methylsterol monooxygenase 1 (293 aa).

Transmembrane regions (helical) follow at residues 55–75 (LIVH…FQFI) and 100–120 (VLLF…YYFT). The region spanning 145-274 (CAVIEDTWHY…FTWWDRIFGT (130 aa)) is the Fatty acid hydroxylase domain. A Histidine box-1 motif is present at residues 157-161 (HRLLH). Positions 170 to 174 (HKIHH) match the Histidine box-2 motif. The helical transmembrane segment at 199–219 (FFIGIMLLCDHVILLWAWVTV) threads the bilayer. The Histidine box-3 motif lies at 249–255 (HHDFHHM).

It belongs to the sterol desaturase family. The cofactor is Fe cation. Ubiquitinated by MARCHF6, leading to proteasomal degradation.

The protein resides in the endoplasmic reticulum membrane. The catalysed reaction is 4,4-dimethyl-5alpha-cholest-7-en-3beta-ol + 6 Fe(II)-[cytochrome b5] + 3 O2 + 5 H(+) = 4alpha-carboxy-4beta-methyl-5alpha-cholest-7-ene-3beta-ol + 6 Fe(III)-[cytochrome b5] + 4 H2O. The enzyme catalyses 4,4-dimethyl-5alpha-cholesta-8,24-dien-3beta-ol + 6 Fe(II)-[cytochrome b5] + 3 O2 + 5 H(+) = 4beta-methylzymosterol-4alpha-carboxylate + 6 Fe(III)-[cytochrome b5] + 4 H2O. It catalyses the reaction 4alpha-methylzymosterol + 6 Fe(II)-[cytochrome b5] + 3 O2 + 5 H(+) = 4alpha-carboxyzymosterol + 6 Fe(III)-[cytochrome b5] + 4 H2O. It carries out the reaction 4alpha-methyl-5alpha-cholest-7-en-3beta-ol + 6 Fe(II)-[cytochrome b5] + 3 O2 + 5 H(+) = 4alpha-carboxy-5alpha-cholest-7-en-3beta-ol + 6 Fe(III)-[cytochrome b5] + 4 H2O. The catalysed reaction is 4,4-dimethyl-5alpha-cholest-8-en-3beta-ol + 6 Fe(II)-[cytochrome b5] + 3 O2 + 5 H(+) = 4alpha-carboxy-4beta-methyl-5alpha-cholest-8-en-3beta-ol + 6 Fe(III)-[cytochrome b5] + 4 H2O. The enzyme catalyses 4alpha-methyl-5alpha-cholest-8-en-3beta-ol + 6 Fe(II)-[cytochrome b5] + 3 O2 + 5 H(+) = 4alpha-carboxy-5alpha-cholest-8-ene-3beta-ol + 6 Fe(III)-[cytochrome b5] + 4 H2O. Its pathway is steroid biosynthesis; zymosterol biosynthesis; zymosterol from lanosterol: step 3/6. It functions in the pathway steroid biosynthesis; cholesterol biosynthesis. Its function is as follows. Catalyzes the three-step monooxygenation required for the demethylation of 4,4-dimethyl and 4alpha-methylsterols, which can be subsequently metabolized to cholesterol. The polypeptide is Methylsterol monooxygenase 1 (MSMO1) (Sus scrofa (Pig)).